Reading from the N-terminus, the 926-residue chain is Alanine--tRNA ligase (926 aa).

Residues His611, His615, Cys714, and His718 each contribute to the Zn(2+) site.

It belongs to the class-II aminoacyl-tRNA synthetase family. It depends on Zn(2+) as a cofactor.

It is found in the cytoplasm. It catalyses the reaction tRNA(Ala) + L-alanine + ATP = L-alanyl-tRNA(Ala) + AMP + diphosphate. In terms of biological role, catalyzes the attachment of alanine to tRNA(Ala) in a two-step reaction: alanine is first activated by ATP to form Ala-AMP and then transferred to the acceptor end of tRNA(Ala). Also edits incorrectly charged Ser-tRNA(Ala) and Gly-tRNA(Ala) via its editing domain. This is Alanine--tRNA ligase from Methanosarcina mazei (strain ATCC BAA-159 / DSM 3647 / Goe1 / Go1 / JCM 11833 / OCM 88) (Methanosarcina frisia).